The sequence spans 1107 residues: DNA polymerase delta catalytic subunit (1107 aa).

The disordered stretch occupies residues 1–34; the sequence is MDGKRRPGPGPGVPPKRARGGLWDDDDAPRPSQF. A Nuclear localization signal motif is present at residues 4–19; the sequence is KRRPGPGPGVPPKRAR. Residue arginine 19 is modified to Omega-N-methylarginine. Lysine 574 is covalently cross-linked (Glycyl lysine isopeptide (Lys-Gly) (interchain with G-Cter in SUMO2)). Zn(2+)-binding residues include cysteine 1012, cysteine 1015, cysteine 1026, and cysteine 1029. A CysA-type zinc finger spans residues 1012 to 1029; that stretch reads CIGCRTVLSHQGAVCEFC. 4 residues coordinate [4Fe-4S] cluster: cysteine 1058, cysteine 1061, cysteine 1071, and cysteine 1076. The CysB motif motif lies at 1058–1076; it reads CQRCQGSLHEDVICTSRDC.

This sequence belongs to the DNA polymerase type-B family. As to quaternary structure, component of the tetrameric DNA polymerase delta complex (Pol-delta4), which consists of POLD1/p125, POLD2/p50, POLD3/p66/p68 and POLD4/p12, with POLD1 bearing both DNA polymerase and 3' to 5' proofreading exonuclease activities. Within Pol-delta4, directly interacts with POLD2 and POLD4. Following genotoxic stress by DNA-damaging agents, such as ultraviolet light and methyl methanesulfonate, or by replication stress induced by treatment with hydroxyurea or aphidicolin, Pol-delta4 is converted into a trimeric form of the complex (Pol-delta3) by POLD4 degradation. Pol-delta3 is the major form at S phase replication sites and DNA damage sites. POLD1 displays different catalytic properties depending upon the complex it is found in. It exhibits higher proofreading activity and fidelity than Pol-delta4, making it particularly well suited to respond to DNA damage. Directly interacts with PCNA, as do POLD3 and POLD4; this interaction stimulates Pol-delta4 polymerase activity. As POLD2 and POLD4, directly interacts with WRNIP1; this interaction stimulates DNA polymerase delta-mediated DNA synthesis, independently of the presence of PCNA. This stimulation may be due predominantly to an increase of initiation frequency and also to increased processivity. Also observed as a dimeric complex with POLD2 (Pol-delta2 complex). Pol-delta2 is relatively insensitive to the PCNA stimulation (2-5-fold) compared to Pol-delta4 that is stimulated by over 50-fold. The DNA polymerase delta complex interacts with POLDIP2; this interaction is probably mediated through direct binding to POLD2. Interacts with CIAO1. Interacts with POLDIP2. Interacts with RFC1. It depends on [4Fe-4S] cluster as a cofactor. As to expression, widely expressed, with high levels of expression in heart and lung.

It localises to the nucleus. It catalyses the reaction DNA(n) + a 2'-deoxyribonucleoside 5'-triphosphate = DNA(n+1) + diphosphate. Its activity is regulated as follows. Regulated by alteration of quaternary structure. Exhibits burst rates of DNA synthesis are about 5 times faster in the presence of POLD4 (Pol-delta4 complex) than in its absence (Pol-delta3 complex), while the affinity of the enzyme for its DNA and dNTP substrates appears unchanged. The Pol-delta3 complex is more likely to proofread DNA synthesis because it cleaves single-stranded DNA twice as fast and transfers mismatched DNA from the polymerase to the exonuclease sites 9 times faster compared to the Pol-delta3 complex. Pol-delta3 also extends mismatched primers 3 times more slowly in the absence of POLD4. The conversion of Pol-delta4 into Pol-delta3 is induced by genotoxic stress or by replication stress leading POLD4 degradation. Stimulated in the presence of PCNA. This stimulation is further increased in the presence of KCTD13/PDIP1, most probably via direct interaction between KCTD13 and POLD2. Its function is as follows. As the catalytic component of the trimeric (Pol-delta3 complex) and tetrameric DNA polymerase delta complexes (Pol-delta4 complex), plays a crucial role in high fidelity genome replication, including in lagging strand synthesis, and repair. Exhibits both DNA polymerase and 3'- to 5'-exonuclease activities. Requires the presence of accessory proteins POLD2, POLD3 and POLD4 for full activity. Depending upon the absence (Pol-delta3) or the presence of POLD4 (Pol-delta4), displays differences in catalytic activity. Most notably, expresses higher proofreading activity in the context of Pol-delta3 compared with that of Pol-delta4. Although both Pol-delta3 and Pol-delta4 process Okazaki fragments in vitro, Pol-delta3 may be better suited to fulfill this task, exhibiting near-absence of strand displacement activity compared to Pol-delta4 and stalling on encounter with the 5'-blocking oligonucleotides. Pol-delta3 idling process may avoid the formation of a gap, while maintaining a nick that can be readily ligated. Along with DNA polymerase kappa, DNA polymerase delta carries out approximately half of nucleotide excision repair (NER) synthesis following UV irradiation. Under conditions of DNA replication stress, in the presence of POLD3 and POLD4, may catalyze the repair of broken replication forks through break-induced replication (BIR). Involved in the translesion synthesis (TLS) of templates carrying O6-methylguanine, 8oxoG or abasic sites. This is DNA polymerase delta catalytic subunit from Homo sapiens (Human).